Reading from the N-terminus, the 270-residue chain is Putative pyruvate, phosphate dikinase regulatory protein 1 (270 aa).

Residue 151–158 participates in ADP binding; the sequence is GVSRTSKT.

Belongs to the pyruvate, phosphate/water dikinase regulatory protein family. PDRP subfamily.

The enzyme catalyses N(tele)-phospho-L-histidyl/L-threonyl-[pyruvate, phosphate dikinase] + ADP = N(tele)-phospho-L-histidyl/O-phospho-L-threonyl-[pyruvate, phosphate dikinase] + AMP + H(+). It carries out the reaction N(tele)-phospho-L-histidyl/O-phospho-L-threonyl-[pyruvate, phosphate dikinase] + phosphate + H(+) = N(tele)-phospho-L-histidyl/L-threonyl-[pyruvate, phosphate dikinase] + diphosphate. Its function is as follows. Bifunctional serine/threonine kinase and phosphorylase involved in the regulation of the pyruvate, phosphate dikinase (PPDK) by catalyzing its phosphorylation/dephosphorylation. The polypeptide is Putative pyruvate, phosphate dikinase regulatory protein 1 (Enterococcus faecalis (strain ATCC 700802 / V583)).